Here is a 684-residue protein sequence, read N- to C-terminus: Rabphilin-3A (684 aa).

The interval 1-21 is disordered; sequence MTDTVVNRWMYPGDGPLQSND. Residues 40–157 enclose the RabBD domain; it reads QRKQEELTDE…KRSGAWFFKG (118 aa). The FYVE-type zinc finger occupies 88–145; sequence GDGVNRCILCGEQLGMLGSACVVCEDCKKNVCTKCGVETSNNRPHPVWLCKICLEQRE. Zn(2+) is bound by residues C94, C97, C111, C114, C119, C122, C137, and C140. Positions 162 to 377 are disordered; sequence VLPQPMPIKK…EEEEANSYDS (216 aa). The span at 199-208 shows a compositional bias: basic and acidic residues; it reads ARGDMEDRRA. R223 carries the omega-N-methylarginine modification. Basic and acidic residues predominate over residues 243–252; sequence RDSEGWDHGH. S274 is modified (phosphoserine). Residues 283-299 are compositionally biased toward pro residues; it reads ASMPSPAPPQPVQPGPP. Low complexity predominate over residues 301–310; that stretch reads GSRAAPGPGR. In terms of domain architecture, C2 1 spans 382 to 504; it reads TLGALEFSLL…KANQRKNFNI (123 aa). M412, D413, D419, D474, E475, D476, E482, E529, D571, D577, D631, Y632, D633, and D639 together coordinate Ca(2+). The region spanning 540–673 is the C2 2 domain; the sequence is ERGKILVSLM…NKDKKIERWH (134 aa). Residues S682 and S683 each carry the phosphoserine modification.

As to quaternary structure, interacts with RAB3B, RAB3C, RAB3D, RAB8A, RAB27A and RAB27B. Interacts with RAB3A; this interaction recruits RPH3A to synaptic vesicules. Interacts (via C2B domain) with SNAP25. Interacts with deubiquitinating enzyme CAND1; this interaction results in the deubiquitination of RPH3A. Interacts with GRIN2A and DLG4; this ternary complex regulates NMDA receptor composition at postsynaptic membranes. Interacts with SNCA. Requires Ca(2+) as cofactor. Ubiquitinated. Deubiquitinated by CAND1 to prevent its degradation. In terms of tissue distribution, specifically expressed in brain.

Its subcellular location is the cytoplasmic vesicle. The protein localises to the secretory vesicle. The protein resides in the synaptic vesicle membrane. It is found in the cell projection. It localises to the dendritic spine. Its subcellular location is the postsynaptic cell membrane. The protein localises to the membrane. Functionally, plays an essential role in docking and fusion steps of regulated exocytosis. At the presynaptic level, RPH3A is recruited by RAB3A to the synaptic vesicle membrane in a GTP-dependent manner where it modulates synaptic vesicle trafficking and calcium-triggered neurotransmitter release. In the post-synaptic compartment, forms a ternary complex with GRIN2A and DLG4 and regulates NMDA receptor stability. Also plays a role in the exocytosis of arginine vasopressin hormone. This Rattus norvegicus (Rat) protein is Rabphilin-3A (Rph3a).